The primary structure comprises 96 residues: Co-chaperonin GroES (96 aa).

It belongs to the GroES chaperonin family. As to quaternary structure, heptamer of 7 subunits arranged in a ring. Interacts with the chaperonin GroEL.

It localises to the cytoplasm. In terms of biological role, together with the chaperonin GroEL, plays an essential role in assisting protein folding. The GroEL-GroES system forms a nano-cage that allows encapsulation of the non-native substrate proteins and provides a physical environment optimized to promote and accelerate protein folding. GroES binds to the apical surface of the GroEL ring, thereby capping the opening of the GroEL channel. This is Co-chaperonin GroES from Halorhodospira halophila (strain DSM 244 / SL1) (Ectothiorhodospira halophila (strain DSM 244 / SL1)).